The chain runs to 351 residues: Dual-specificity RNA methyltransferase RlmN (351 aa).

Residue Glu90 is the Proton acceptor of the active site. One can recognise a Radical SAM core domain in the interval Glu96–Asp330. Cys103 and Cys335 are oxidised to a cystine. 3 residues coordinate [4Fe-4S] cluster: Cys110, Cys114, and Cys117. S-adenosyl-L-methionine-binding positions include Gly162–Glu163, Ser194, Ser216–His218, and Asn292. The S-methylcysteine intermediate role is filled by Cys335.

It belongs to the radical SAM superfamily. RlmN family. The cofactor is [4Fe-4S] cluster.

The protein resides in the cytoplasm. The catalysed reaction is adenosine(2503) in 23S rRNA + 2 reduced [2Fe-2S]-[ferredoxin] + 2 S-adenosyl-L-methionine = 2-methyladenosine(2503) in 23S rRNA + 5'-deoxyadenosine + L-methionine + 2 oxidized [2Fe-2S]-[ferredoxin] + S-adenosyl-L-homocysteine. It carries out the reaction adenosine(37) in tRNA + 2 reduced [2Fe-2S]-[ferredoxin] + 2 S-adenosyl-L-methionine = 2-methyladenosine(37) in tRNA + 5'-deoxyadenosine + L-methionine + 2 oxidized [2Fe-2S]-[ferredoxin] + S-adenosyl-L-homocysteine. Functionally, specifically methylates position 2 of adenine 2503 in 23S rRNA and position 2 of adenine 37 in tRNAs. m2A2503 modification seems to play a crucial role in the proofreading step occurring at the peptidyl transferase center and thus would serve to optimize ribosomal fidelity. This Solidesulfovibrio magneticus (strain ATCC 700980 / DSM 13731 / RS-1) (Desulfovibrio magneticus) protein is Dual-specificity RNA methyltransferase RlmN.